The chain runs to 606 residues: Probable glutamine--fructose-6-phosphate aminotransferase [isomerizing] (606 aa).

Cysteine 2 functions as the For GATase activity in the catalytic mechanism. A Glutamine amidotransferase type-2 domain is found at 2–224 (CGISACLNHT…DNDYGYITNN (223 aa)). 2 consecutive SIS domains span residues 282–427 (FFPE…SLDN) and 458–596 (LLEF…PDYP).

The enzyme catalyses D-fructose 6-phosphate + L-glutamine = D-glucosamine 6-phosphate + L-glutamate. It participates in nucleotide-sugar biosynthesis; UDP-N-acetyl-alpha-D-glucosamine biosynthesis; alpha-D-glucosamine 6-phosphate from D-fructose 6-phosphate: step 1/1. Controls the flux of glucose into the hexosamine pathway. Most likely involved in regulating the availability of precursors for glycosylation of proteins (Potential). The sequence is that of Probable glutamine--fructose-6-phosphate aminotransferase [isomerizing] from Acanthamoeba polyphaga (Amoeba).